The chain runs to 458 residues: Cysteine protease ATG4C (458 aa).

Met-1 bears the N-acetylmethionine mark. The active-site Nucleophile is the Cys-111. Catalysis depends on residues Asp-345 and His-347. Position 451 is a phosphoserine (Ser-451). Residue Thr-452 is modified to Phosphothreonine.

The protein belongs to the peptidase C54 family.

The protein resides in the cytoplasm. The catalysed reaction is [protein]-C-terminal L-amino acid-glycyl-phosphatidylethanolamide + H2O = [protein]-C-terminal L-amino acid-glycine + a 1,2-diacyl-sn-glycero-3-phosphoethanolamine. Its activity is regulated as follows. Inhibited by N-ethylmaleimide. Cysteine protease that plays a key role in autophagy by mediating both proteolytic activation and delipidation of ATG8 family proteins. The protease activity is required for proteolytic activation of ATG8 family proteins: cleaves the C-terminal amino acid of ATG8 proteins MAP1LC3 and GABARAPL2, to reveal a C-terminal glycine. Exposure of the glycine at the C-terminus is essential for ATG8 proteins conjugation to phosphatidylethanolamine (PE) and insertion to membranes, which is necessary for autophagy. In addition to the protease activity, also mediates delipidation of ATG8 family proteins. Catalyzes delipidation of PE-conjugated forms of ATG8 proteins during macroautophagy. Compared to ATG4B, the major protein for proteolytic activation of ATG8 proteins, shows weaker ability to cleave the C-terminal amino acid of ATG8 proteins, while it displays stronger delipidation activity. In contrast to other members of the family, weakly or not involved in phagophore growth during mitophagy. The chain is Cysteine protease ATG4C from Mus musculus (Mouse).